The primary structure comprises 144 residues: Small ribosomal subunit protein eS10A (144 aa).

A disordered region spans residues 90 to 144 (THKRQVRPTAPRAGRPEPRERASADAGYRRAEKKDEGAAPSGFAPSFRGGFGRPQ). Basic and acidic residues predominate over residues 103 to 126 (GRPEPRERASADAGYRRAEKKDEG).

It belongs to the eukaryotic ribosomal protein eS10 family. As to quaternary structure, component of the small ribosomal subunit (SSU). Mature yeast ribosomes consist of a small (40S) and a large (60S) subunit. The 40S small subunit contains 1 molecule of ribosomal RNA (18S rRNA) and at least 33 different proteins. The large 60S subunit contains 3 rRNA molecules (25S, 5.8S and 5S rRNA) and at least 46 different proteins. eS10 interacts with GCN1 (via middle region); this interaction is direct and promotes GCN2 kinase activity.

Its subcellular location is the cytoplasm. Component of the ribosome, a large ribonucleoprotein complex responsible for the synthesis of proteins in the cell. The small ribosomal subunit (SSU) binds messenger RNAs (mRNAs) and translates the encoded message by selecting cognate aminoacyl-transfer RNA (tRNA) molecules. The large subunit (LSU) contains the ribosomal catalytic site termed the peptidyl transferase center (PTC), which catalyzes the formation of peptide bonds, thereby polymerizing the amino acids delivered by tRNAs into a polypeptide chain. The nascent polypeptides leave the ribosome through a tunnel in the LSU and interact with protein factors that function in enzymatic processing, targeting, and the membrane insertion of nascent chains at the exit of the ribosomal tunnel. eS10 plays a role as a positive regulator of the GCN2 kinase activity by stimulating GCN1-mediated GCN2 activation. The sequence is that of Small ribosomal subunit protein eS10A (rps1001) from Schizosaccharomyces pombe (strain 972 / ATCC 24843) (Fission yeast).